Reading from the N-terminus, the 506-residue chain is Lysine--tRNA ligase (506 aa).

Positions 415 and 422 each coordinate Mg(2+).

This sequence belongs to the class-II aminoacyl-tRNA synthetase family. As to quaternary structure, homodimer. Requires Mg(2+) as cofactor.

The protein resides in the cytoplasm. The enzyme catalyses tRNA(Lys) + L-lysine + ATP = L-lysyl-tRNA(Lys) + AMP + diphosphate. This chain is Lysine--tRNA ligase, found in Erwinia tasmaniensis (strain DSM 17950 / CFBP 7177 / CIP 109463 / NCPPB 4357 / Et1/99).